The sequence spans 1937 residues: Myosin-8 (1937 aa).

One can recognise a Myosin N-terminal SH3-like domain in the interval 35-84 (DAKTSVFVAEPKESYVKSTIQSKEGGKVTVKTEGGATLTVREDQVFPMNP). T66 and T71 each carry phosphothreonine. Residues 88–781 (DKIEDMAMMT…LLGLLEEMRD (694 aa)) form the Myosin motor domain. At K132 the chain carries N6,N6,N6-trimethyllysine. An ATP-binding site is contributed by 181 to 188 (GESGAGKT). Residue Y389 is modified to Phosphotyrosine. The residue at position 392 (S392) is a Phosphoserine. T419 bears the Phosphothreonine mark. Position 424 is a phosphotyrosine (Y424). The residue at position 625 (S625) is a Phosphoserine. The interval 658-680 (LNKLMTNLRSTHPHFVRCIIPNE) is actin-binding. Position 756 is a pros-methylhistidine (H756). Residues 760–774 (KFGHTKVFFKAGLLG) form an actin-binding region. Residues 781-813 (DEKLAQIITRTQAVCRGFLMRVEYQKMLQRREA) enclose the IQ domain. Positions 842 to 1937 (LLKSAETEKE…REVHTKISAE (1096 aa)) form a coiled coil. 2 positions are modified to phosphoserine: S1091 and S1095. Positions 1126–1146 (EAERASRAKAEKQRSDLSREL) are disordered. Residues 1127–1146 (AERASRAKAEKQRSDLSREL) show a composition bias toward basic and acidic residues. Phosphoserine is present on residues S1161, S1236, S1242, and S1260. T1264 and T1285 each carry phosphothreonine. Residues S1291, S1302, and S1305 each carry the phosphoserine modification. Position 1463 is a phosphotyrosine (Y1463). T1466 is subject to Phosphothreonine. S1473 is subject to Phosphoserine. Y1491 carries the post-translational modification Phosphotyrosine. A Phosphoserine modification is found at S1494. At T1500 the chain carries Phosphothreonine. Position 1513 is a phosphoserine (S1513). Position 1516 is a phosphothreonine (T1516). 5 positions are modified to phosphoserine: S1553, S1573, S1602, S1713, and S1725. A Phosphothreonine modification is found at T1729. Position 1738 is a phosphoserine (S1738).

The protein belongs to the TRAFAC class myosin-kinesin ATPase superfamily. Myosin family. In terms of assembly, muscle myosin is a hexameric protein that consists of 2 heavy chain subunits (MHC), 2 alkali light chain subunits (MLC) and 2 regulatory light chain subunits (MLC-2).

The protein localises to the cytoplasm. Its subcellular location is the myofibril. Functionally, muscle contraction. The chain is Myosin-8 (MYH8) from Homo sapiens (Human).